The chain runs to 480 residues: MNTHPQTSPNTHYKIADISLTDWGRKEIDIAEHEMPGLMSIRRKYASKQPLKGVRVTGSLHMTIQTAVLIETLKDIGADVRWASCNIFSTQDHAAAAIATSGTPVFAWKGETLEEYWDCTLQALTFTLSDGTLTGPELIVDDGGDATLLIHKGYELENGSTWVDEPSDSLEEQVIKRLLKRIAIERPGYWTRVVNDWKGVSEETTTGVHRLYQIAATGRLLVPAINVNDSVTKSKFDNLYGCRESLADGLKRAMDVMLAGKLAVVCGYGDVGKGSAHSLRAYGARVIVTEIDPICALQAAMEGFEVTTVEDTLGQADIYVTTTGNKDVIRIEHMTAMKDQVIVCNIGHFDNEIQVDALNALAGVQKINIKPQVDKFILPNGNTLFLLAEGRLVNLGCATGHPSFVMSNSFANQTLAQIDLWQNKDVYEKNVYRLPKKLDEEVARLHLEKIGVKLTTLTANQAAYLGISVEGPFKPEHYRY.

Thr63, Asp142, and Glu203 together coordinate substrate. 204–206 (TTT) is a binding site for NAD(+). Positions 233 and 237 each coordinate substrate. NAD(+)-binding positions include Asn238, 267–272 (GYGDVG), Glu290, Asn325, 346–348 (IGH), and Asn394.

Belongs to the adenosylhomocysteinase family. NAD(+) is required as a cofactor.

The protein localises to the cytoplasm. The enzyme catalyses S-adenosyl-L-homocysteine + H2O = L-homocysteine + adenosine. The protein operates within amino-acid biosynthesis; L-homocysteine biosynthesis; L-homocysteine from S-adenosyl-L-homocysteine: step 1/1. Functionally, may play a key role in the regulation of the intracellular concentration of adenosylhomocysteine. The chain is Adenosylhomocysteinase from Xylella fastidiosa (strain 9a5c).